Here is a 147-residue protein sequence, read N- to C-terminus: Large ribosomal subunit protein bL9 (147 aa).

This sequence belongs to the bacterial ribosomal protein bL9 family.

Binds to the 23S rRNA. The polypeptide is Large ribosomal subunit protein bL9 (Nitratiruptor sp. (strain SB155-2)).